A 404-amino-acid chain; its full sequence is Phospho-N-acetylmuramoyl-pentapeptide-transferase (404 aa).

10 helical membrane passes run 30–50 (SAAILSLCISIFLGKRLIIFF), 73–93 (IPTMGGIIIIAATVVPTLLFA), 100–120 (IMLLLISIIWMGLIGFIDDYI), 132–152 (GKFKIVGQVALGVIVGITLIF), 209–229 (YMWIVYVLFMIFIIAAVSNGA), 242–262 (TSAIIGTTLAILAYVSGNVIF), 274–294 (LAELAIFCTAFVGACVGFLWY), 301–321 (IFMGDTGSLAIGSVIAVLAIV), 326–346 (LMIPLLCGIFFIETLSVIIQV), and 381–401 (KIVTRFWIVGIVLAILSLVTL).

It belongs to the glycosyltransferase 4 family. MraY subfamily. Mg(2+) is required as a cofactor.

It is found in the cell inner membrane. The catalysed reaction is UDP-N-acetyl-alpha-D-muramoyl-L-alanyl-gamma-D-glutamyl-meso-2,6-diaminopimeloyl-D-alanyl-D-alanine + di-trans,octa-cis-undecaprenyl phosphate = di-trans,octa-cis-undecaprenyl diphospho-N-acetyl-alpha-D-muramoyl-L-alanyl-D-glutamyl-meso-2,6-diaminopimeloyl-D-alanyl-D-alanine + UMP. Its pathway is cell wall biogenesis; peptidoglycan biosynthesis. In terms of biological role, catalyzes the initial step of the lipid cycle reactions in the biosynthesis of the cell wall peptidoglycan: transfers peptidoglycan precursor phospho-MurNAc-pentapeptide from UDP-MurNAc-pentapeptide onto the lipid carrier undecaprenyl phosphate, yielding undecaprenyl-pyrophosphoryl-MurNAc-pentapeptide, known as lipid I. This Amoebophilus asiaticus (strain 5a2) protein is Phospho-N-acetylmuramoyl-pentapeptide-transferase.